Here is a 148-residue protein sequence, read N- to C-terminus: Isotocin-neurophysin IT 2 (148 aa).

The signal sequence occupies residues Met1–Ala20. A disulfide bond links Cys21 and Cys26. A Glycine amide modification is found at Gly29. 7 disulfide bridges follow: Cys42-Cys86, Cys45-Cys59, Cys53-Cys76, Cys60-Cys66, Cys93-Cys105, Cys99-Cys117, and Cys106-Cys111.

The protein belongs to the vasopressin/oxytocin family.

Its function is as follows. Isotocin causes contraction of smooth muscles. This Catostomus commersonii (White sucker) protein is Isotocin-neurophysin IT 2.